The following is a 315-amino-acid chain: Cross-pathway control WD-repeat protein 2 (315 aa).

7 WD repeats span residues glycine 14–glycine 54, glycine 62–arginine 101, glycine 104–lysine 144, cysteine 147–asparagine 188, glycine 191–serine 230, glutamate 232–glutamate 270, and glycine 282–serine 315.

It belongs to the WD repeat G protein beta family. Ribosomal protein RACK1 subfamily.

Component of the ribosome, a large ribonucleoprotein complex responsible for the synthesis of proteins in the cell. The small ribosomal subunit (SSU) binds messenger RNAs (mRNAs) and translates the encoded message by selecting cognate aminoacyl-transfer RNA (tRNA) molecules. The large subunit (LSU) contains the ribosomal catalytic site termed the peptidyl transferase center (PTC), which catalyzes the formation of peptide bonds, thereby polymerizing the amino acids delivered by tRNAs into a polypeptide chain. The nascent polypeptides leave the ribosome through a tunnel in the LSU and interact with protein factors that function in enzymatic processing, targeting, and the membrane insertion of nascent chains at the exit of the ribosomal tunnel. Plays in important role in the regulation of vegetative growth and fruiting body development. Especially, positively regulates the expression of genes involved in fruiting body development such as FVFD30 and FVFD16, as well as genes encoding for lectins and hydrophobins. Also regulates the expression of genes involved in cAMP signaling pathway. The polypeptide is Cross-pathway control WD-repeat protein 2 (Flammulina velutipes (Agaricus velutipes)).